Reading from the N-terminus, the 383-residue chain is MSPEVALNRISPALSPFISSVVRNGKVGLDATNCLRITDLKSGCTSLTPGPSCDRFKLHIPYAGETLKWDIIFNAHYPDLPPDFIFGEDAEFLPDPSALHNLASWNPSNPECLLLVVKELVQQYHQFQCSRLRESSRLMFEYQTLLEEPQYGENMEIYAGKKNNWTGEFSARFLLKLPVDFSNIPTYLLKDVNEDPGEDVALLSVSFEDAEATQVFPKLYLSPRIEHALGGSSALHIPAFPGGGCLIDYVPQVCQLLTNKVQYVIQGYHKRREYIAAFLSHFGTGVVEYDAEGFTKLTLLLMWKDFCFLVHIDLPLYFPRDQPTLTFQSVYHFTNSGQLYSQAQKNYPYSPRWDGNEMAKRAKAYFKTFVPQFQEAAFANGKL.

2 UEV-like regions span residues 30–147 (DATN…TLLE) and 275–364 (IAAF…RAKA).

The protein belongs to the BABAM2 family. As to quaternary structure, component of the ARISC complex, at least composed of UIMC1/RAP80, ABRAXAS1, BRCC3/BRCC36, BABAM2 and BABAM1/NBA1. Component of the BRCA1-A complex, at least composed of BRCA1, BARD1, UIMC1/RAP80, ABRAXAS1, BRCC3/BRCC36, BABAM2 and BABAM1/NBA1. In the BRCA1-A complex, interacts directly with ABRAXAS1, BRCC3/BRCC36 and BABAM1/NBA1. Binds polyubiquitin. Component of the BRISC complex, at least composed of ABRAXAS2, BRCC3/BRCC36, BABAM2 and BABAM1/NBA1. Identified in a complex with SHMT2 and the other subunits of the BRISC complex. Component of the BRCA1/BRCA2 containing complex (BRCC), which also contains BRCA1, BRCA2, BARD1, BRCC3/BRCC36 and RAD51. BRCC is a ubiquitin E3 ligase complex that enhances cellular survival following DNA damage. May interact with FAS and TNFRSF1A.

It is found in the cytoplasm. The protein localises to the nucleus. Functionally, component of the BRCA1-A complex, a complex that specifically recognizes 'Lys-63'-linked ubiquitinated histones H2A and H2AX at DNA lesions sites, leading to target the BRCA1-BARD1 heterodimer to sites of DNA damage at double-strand breaks (DSBs). The BRCA1-A complex also possesses deubiquitinase activity that specifically removes 'Lys-63'-linked ubiquitin on histones H2A and H2AX. In the BRCA1-A complex, it acts as an adapter that bridges the interaction between BABAM1/NBA1 and the rest of the complex, thereby being required for the complex integrity and modulating the E3 ubiquitin ligase activity of the BRCA1-BARD1 heterodimer. Component of the BRISC complex, a multiprotein complex that specifically cleaves 'Lys-63'-linked ubiquitin in various substrates. Within the BRISC complex, acts as an adapter that bridges the interaction between BABAM1/NBA1 and the rest of the complex, thereby being required for the complex integrity. The BRISC complex is required for normal mitotic spindle assembly and microtubule attachment to kinetochores via its role in deubiquitinating NUMA1. The BRISC complex plays a role in interferon signaling via its role in the deubiquitination of the interferon receptor IFNAR1; deubiquitination increases IFNAR1 activity by enhancing its stability and cell surface expression. Down-regulates the response to bacterial lipopolysaccharide (LPS) via its role in IFNAR1 deubiquitination. May play a role in homeostasis or cellular differentiation in cells of neural, epithelial and germline origins. May also act as a death receptor-associated anti-apoptotic protein, which inhibits the mitochondrial apoptotic pathway. May regulate TNF-alpha signaling through its interactions with TNFRSF1A; however these effects may be indirect. This is BRISC and BRCA1-A complex member 2 (BABAM2) from Gallus gallus (Chicken).